A 353-amino-acid polypeptide reads, in one-letter code: Alanine racemase (353 aa).

Lysine 33 functions as the Proton acceptor; specific for D-alanine in the catalytic mechanism. Lysine 33 is modified (N6-(pyridoxal phosphate)lysine). Substrate is bound at residue arginine 129. The active-site Proton acceptor; specific for L-alanine is tyrosine 250. Methionine 298 is a substrate binding site.

It belongs to the alanine racemase family. Pyridoxal 5'-phosphate serves as cofactor.

It catalyses the reaction L-alanine = D-alanine. Its pathway is amino-acid biosynthesis; D-alanine biosynthesis; D-alanine from L-alanine: step 1/1. In terms of biological role, catalyzes the interconversion of L-alanine and D-alanine. May also act on other amino acids. This is Alanine racemase (alr) from Aromatoleum aromaticum (strain DSM 19018 / LMG 30748 / EbN1) (Azoarcus sp. (strain EbN1)).